The sequence spans 310 residues: MKITVIGAGNVGATATQRIVEKQLAREVVLVDVVDGVPQGKALDMYESAPVELFDTRVVGTTGYEETAGSDIILITAGRPRKPGMSRDDLLAMNTEIVKTVTEEAVSKSPNAIIIVVSNPLDVMTYVAYVRSGFPKERVIGMAGVLDTARFRTFIAMELNVSVQDVNAFVLGGHGDSMVPVVKYTTVAGIPISELLPQDRIAALVDRARKGGIEIVNYLKTGSAYYAPSASAVEMIDAIVNDRKRIMPCSAYVTGQYGLNDVFVGVPVKLGRGGVEQVLEINLDEADRNALQASANEVKESCEKVNSMMQ.

Residues 7 to 12 (GAGNVG) and Asp32 each bind NAD(+). Residues Arg81 and Arg87 each contribute to the substrate site. Residues Asn94 and 117–119 (VSN) each bind NAD(+). Positions 119 and 150 each coordinate substrate. His174 functions as the Proton acceptor in the catalytic mechanism.

Belongs to the LDH/MDH superfamily. MDH type 3 family.

The catalysed reaction is (S)-malate + NAD(+) = oxaloacetate + NADH + H(+). In terms of biological role, catalyzes the reversible oxidation of malate to oxaloacetate. The protein is Malate dehydrogenase of Chloroherpeton thalassium (strain ATCC 35110 / GB-78).